The sequence spans 533 residues: Probable intron-encoded endonuclease 3 (533 aa).

3 helical membrane-spanning segments follow: residues 1–21 (MYLS…FFGR), 30–50 (LITC…FFEV), and 81–101 (LTVA…IYSI). The ndh-5 exon 1 encoded stretch occupies residues 1–108 (MYLSIIILPL…YSISYMSHDP (108 aa)). The interval 109 to 533 (RGRVRGKRVY…SISLLLGRRR (425 aa)) is ndh-5 intron 1 encoded.

In the N-terminal section; belongs to the complex I subunit 5 family. It in the C-terminal section; belongs to the LAGLIDADG endonuclease family.

Its subcellular location is the mitochondrion membrane. Its function is as follows. Mitochondrial DNA endonuclease involved in intron homing. This Neurospora crassa (strain ATCC 24698 / 74-OR23-1A / CBS 708.71 / DSM 1257 / FGSC 987) protein is Probable intron-encoded endonuclease 3.